Here is a 548-residue protein sequence, read N- to C-terminus: Probable thiamine biosynthetic bifunctional enzyme, chloroplastic (548 aa).

The span at Met-1–His-10 shows a compositional bias: polar residues. Positions Met-1–Arg-40 are disordered. Residues Met-1 to Ser-47 constitute a chloroplast transit peptide. The segment covering Pro-11–Pro-28 has biased composition (low complexity). Residues Gln-372–Lys-376 and Asn-404 each bind 4-amino-2-methyl-5-(diphosphooxymethyl)pyrimidine. Mg(2+)-binding residues include Asp-405 and Asp-424. Ser-443 contacts 4-amino-2-methyl-5-(diphosphooxymethyl)pyrimidine. Thr-469–Thr-471 contributes to the 2-[(2R,5Z)-2-carboxy-4-methylthiazol-5(2H)-ylidene]ethyl phosphate binding site. Residue Lys-472 participates in 4-amino-2-methyl-5-(diphosphooxymethyl)pyrimidine binding. 2-[(2R,5Z)-2-carboxy-4-methylthiazol-5(2H)-ylidene]ethyl phosphate contacts are provided by residues Gly-499 and Val-522–Ser-523.

The protein belongs to the thiamine-phosphate synthase family. Mg(2+) is required as a cofactor.

The protein localises to the plastid. Its subcellular location is the chloroplast. It catalyses the reaction 2-[(2R,5Z)-2-carboxy-4-methylthiazol-5(2H)-ylidene]ethyl phosphate + 4-amino-2-methyl-5-(diphosphooxymethyl)pyrimidine + 2 H(+) = thiamine phosphate + CO2 + diphosphate. The catalysed reaction is 2-(2-carboxy-4-methylthiazol-5-yl)ethyl phosphate + 4-amino-2-methyl-5-(diphosphooxymethyl)pyrimidine + 2 H(+) = thiamine phosphate + CO2 + diphosphate. It carries out the reaction 4-methyl-5-(2-phosphooxyethyl)-thiazole + 4-amino-2-methyl-5-(diphosphooxymethyl)pyrimidine + H(+) = thiamine phosphate + diphosphate. The enzyme catalyses 4-amino-5-hydroxymethyl-2-methylpyrimidine + ATP = 4-amino-2-methyl-5-(phosphooxymethyl)pyrimidine + ADP + H(+). It participates in cofactor biosynthesis; thiamine diphosphate biosynthesis; thiamine phosphate from 4-amino-2-methyl-5-diphosphomethylpyrimidine and 4-methyl-5-(2-phosphoethyl)-thiazole: step 1/1. The protein operates within cofactor biosynthesis; thiamine diphosphate biosynthesis; 4-amino-2-methyl-5-diphosphomethylpyrimidine from 5-amino-1-(5-phospho-D-ribosyl)imidazole: step 2/3. Essential for thiamine biosynthesis. Bifunctional enzyme that catalyzes the phosphorylation of hydroxymethylpyrimidine phosphate (HMP-P) to HMP-PP and condenses 4-methyl-5-(beta-hydroxyethyl)thiazole monophosphate (THZ-P) and 2-methyl-4-amino-5-hydroxymethyl pyrimidine pyrophosphate (HMP-PP) to form thiamine monophosphate (TMP). The sequence is that of Probable thiamine biosynthetic bifunctional enzyme, chloroplastic from Oryza sativa subsp. japonica (Rice).